Consider the following 507-residue polypeptide: MRTIYLSLLVFIIVLALNEVMAKKHSSTPKLRRSDFPEDFIFGAATSAYQVEGAAHEDGRGPSIWDTFSEKYPEKIKDGSNGSIASDSYHLYKEDVGLLHQIGFDAYRFSISWSRILPRENLKGGINQAGIDYYNNLINELLSKGIKPFATIFHWDTPQSLEDAYGGFLGAEIVNDFRDYADICFKNFGDRVKHWMTLNEPLTVVQQGYVAGVMAPGRCSKFTNPNCTAGNGATEPYIVGHNLILAHGEAVKVYREKYKASQKGQVGIALNAGWNLPYSESAEDRLAAARAMAFTFDYFMEPLVTGKYPIDMVNYVKGGRLPTFTAKQSKMLKGSYDFIGRNYYSSSYAKDVPCSSENVTLFSDPCASVTGEREGVPIGPKAASDWLLIYPKGIRDLLLYAKYKFKDPVMYITENGRDEASTGKIDLKDSERIDYYAQHLKMVQDAISIGANVKGFFAWSLLDNFEWATGYAVRFGLVYVDFNGGRKRYPKKSAKWFKKLLNEKKKN.

A signal peptide spans 1-22 (MRTIYLSLLVFIIVLALNEVMA). Gln50 is an a beta-D-glucoside binding site. N-linked (GlcNAc...) asparagine glycosylation is present at Asn81. A beta-D-glucoside is bound by residues His154 and 199–200 (NE). Glu200 functions as the Proton donor in the catalytic mechanism. Residues Cys219 and Cys227 are joined by a disulfide bond. An N-linked (GlcNAc...) asparagine glycan is attached at Asn226. Tyr344 is an a beta-D-glucoside binding site. Residue Asn358 is glycosylated (N-linked (GlcNAc...) asparagine). Residues Glu414, Trp459, 466–467 (EW), and Phe475 contribute to the a beta-D-glucoside site. Glu414 acts as the Nucleophile in catalysis.

The protein belongs to the glycosyl hydrolase 1 family.

It catalyses the reaction Hydrolysis of terminal, non-reducing beta-D-glucosyl residues with release of beta-D-glucose.. The sequence is that of Beta-glucosidase 12 from Arabidopsis thaliana (Mouse-ear cress).